A 404-amino-acid chain; its full sequence is Iron-sulfur assembly protein IscA2 (404 aa).

The stretch at 244 to 289 (KEEDEKKLDKLLKKRNIKKRDIVTITEEAKEELKKIISINKKENNN) forms a coiled coil.

This sequence belongs to the HesB/IscA family. In terms of assembly, dimer. Homotetramer. Interacts with ABCB6.

It localises to the mitochondrion. Its pathway is cofactor biosynthesis; iron-sulfur cluster biosynthesis. Participates in iron-sulfur cluster formation (ISC) pathway for iron-sulfur (Fe-S) cluster biogenesis. Can bind and transfer [4Fe-4S] clusters to target apo-proteins. The protein is Iron-sulfur assembly protein IscA2 of Plasmodium falciparum (isolate 3D7).